The primary structure comprises 791 residues: Organellar oligopeptidase A, chloroplastic/mitochondrial (791 aa).

Residues 1-82 (MLMATPTSRA…SSPPSMSSAA (82 aa)) constitute a chloroplast and mitochondrion transit peptide. 2 coiled-coil regions span residues 118–138 (RPGI…LEKS) and 239–259 (DDEK…LSHK). H571 is a Zn(2+) binding site. Residue E572 is part of the active site. Zn(2+) is bound by residues H575 and E601. Residue 703 to 709 (HIFAGGY) participates in substrate binding.

This sequence belongs to the peptidase M3 family. Requires Zn(2+) as cofactor.

It localises to the mitochondrion matrix. Its subcellular location is the plastid. The protein localises to the chloroplast stroma. The catalysed reaction is Hydrolysis of oligopeptides, with broad specificity. Gly or Ala commonly occur as P1 or P1' residues, but more distant residues are also important, as is shown by the fact that Z-Gly-Pro-Gly-|-Gly-Pro-Ala is cleaved, but not Z-(Gly)(5).. With respect to regulation, inhibited by salicylic acid. In terms of biological role, oligopeptidase degrading short peptides from 8 to 23 amino acid residues. Plays a role in the degradation of transit peptides and of peptides derived from other proteolytic events. Does not exhibit a strict cleavage pattern. Binds salicylic acid. In Arabidopsis thaliana (Mouse-ear cress), this protein is Organellar oligopeptidase A, chloroplastic/mitochondrial.